A 441-amino-acid chain; its full sequence is MQPMEVPEIEKQIGINLYSTNTEGLGGRLRQEVEDFIVKEITNREEGKDGRYLVLELTKRDWDTHHFTRTLAKILQISQKRISVAGTKDKRALTTQKISIFDIDALEIEKIHLKDVELKVLGRSRKSVELGDLWGNEFIITIRDISSSPEETRTILEKTNSKVLTQGGVPNFFGVQRFGSVRSVTHLVGKAIVEGNFEKAAMLYIAEPFPEEPEETKAARQFVKETRDFKEGLKTYPLRLGHERAMMNHLISNPEDYSGAFSVLPKNLYRMFVHAYQSYIYNMILCRRIESGISLNRAVEGDIVCFRNEAGLPDSSKTEKVTSETVNAMNRLIKHGRAFITAPLPGFNTEFASGVPGEIESKILKELRVSLEGFNVEEFPEMSSKGTRREVLLQVEPKFEVGEDELNPGKSKTVLEFMLPKGSYATTVLREYMKVDPLQMS.

The active-site Nucleophile is the Asp-89. Positions 168–393 (GVPNFFGVQR…SKGTRREVLL (226 aa)) constitute a TRUD domain.

The protein belongs to the pseudouridine synthase TruD family.

The catalysed reaction is uridine(13) in tRNA = pseudouridine(13) in tRNA. Its function is as follows. Could be responsible for synthesis of pseudouridine from uracil-13 in transfer RNAs. The polypeptide is Probable tRNA pseudouridine synthase D (Methanosarcina acetivorans (strain ATCC 35395 / DSM 2834 / JCM 12185 / C2A)).